Reading from the N-terminus, the 225-residue chain is MRIVFDIGGSVLVPEDPDIDFIKAIAYELVKISEDHEVAVVVGGGKVARKYIQAAKEFTLNETFKDYIGIHITRANAMLLIAALGEKAYPFVVQDFRKAWEVIQLKKIPIMGGTHPGHTTDAVAALLAEYLQADLLVVVTNVDGVYDSDPKKNPNAKKLDRITVDQLVEIAMQEESKAGGSGVVDALAAKFIQRGKIKTYIVGKKDAYHLFDVIKGKHSGTVVEP.

Position 9-10 (Gly-9–Ser-10) interacts with ATP. UMP is bound at residue Gly-44. Residues Gly-45 and Arg-49 each contribute to the ATP site. UMP contacts are provided by residues Asp-66 and Thr-114–Thr-120. The ATP site is built by Thr-140, Asn-141, Tyr-146, and Asp-149.

The protein belongs to the UMP kinase family. In terms of assembly, homohexamer.

It is found in the cytoplasm. It carries out the reaction UMP + ATP = UDP + ADP. Its pathway is pyrimidine metabolism; CTP biosynthesis via de novo pathway; UDP from UMP (UMPK route): step 1/1. Its activity is regulated as follows. Inhibited by UTP. Its function is as follows. Catalyzes the reversible phosphorylation of UMP to UDP. In Thermococcus kodakarensis (strain ATCC BAA-918 / JCM 12380 / KOD1) (Pyrococcus kodakaraensis (strain KOD1)), this protein is Uridylate kinase.